The primary structure comprises 1483 residues: Guanylyl cyclase, membrane (1483 aa).

The next 6 membrane-spanning stretches (helical) occupy residues 50–70 (ISII…YISP), 143–163 (FILR…TFTA), 168–188 (LWKL…LIFE), 198–218 (MVLL…PSML), 219–239 (ASGG…QIAG), and 242–262 (MVLL…ISRF). The tract at residues 323–376 (KKDEESNLTGKKQSKVVVSPPPPPTAAAPQQQDNEISTPQNSRKIVDPQSPSSL) is disordered. Polar residues predominate over residues 355–376 (DNEISTPQNSRKIVDPQSPSSL). The Guanylate cyclase 1 domain maps to 395-517 (TVLFCEIVNF…DTINTSSRMA (123 aa)). Disordered regions lie at residues 598 to 619 (NNTI…THPN) and 672 to 838 (LTSP…GDDF). A compositionally biased stretch (polar residues) spans 610 to 619 (GSATGPTHPN). Low complexity-rich tracts occupy residues 672–684 (LTSP…PQQS), 693–712 (SPRL…SSST), and 720–765 (NNNN…NNNN). The span at 772-786 (SPISQNTTPTGSLSL) shows a compositional bias: polar residues. Transmembrane regions (helical) follow at residues 907–927 (ILAS…VDYF), 982–1002 (IITG…YVVS), 1016–1036 (VVMV…SVPP), 1040–1060 (IPLD…CYNF), 1061–1081 (SGIK…FIEI), and 1094–1114 (IYLS…ITSY). The 129-residue stretch at 1168 to 1296 (TIFLSDIVGF…ESVQITQQME (129 aa)) folds into the Guanylate cyclase 2 domain. 3 residues coordinate Mg(2+): Asp-1173, Ile-1174, and Asp-1217. Disordered regions lie at residues 1348–1369 (QPEV…SLQY) and 1393–1483 (NQND…SESS). Residues 1354-1369 (RSVSVSKSNFGGSLQY) are compositionally biased toward polar residues. Positions 1405 to 1416 (NENGNESSSSNI) are enriched in low complexity. A compositionally biased stretch (acidic residues) spans 1432–1444 (NEDDESSYEDDQE). Residues 1446 to 1465 (NQYLNNSENNKNNNNNSNQI) show a composition bias toward low complexity.

This sequence belongs to the adenylyl cyclase class-4/guanylyl cyclase family. As to quaternary structure, homodimer. Mg(2+) serves as cofactor.

It localises to the membrane. The catalysed reaction is GTP = 3',5'-cyclic GMP + diphosphate. Activated by guanosine 5'-3-O-(thio)triphosphate (GTPgammaS). Inhibited by calcium. Functionally, synthesizes cyclic GMP (cGMP) from GTP, after activation by heterotrimeric or monomeric G proteins. Involved in chemotaxis. This is Guanylyl cyclase, membrane (gca) from Dictyostelium discoideum (Social amoeba).